Reading from the N-terminus, the 119-residue chain is Large ribosomal subunit protein uL18 (119 aa).

Belongs to the universal ribosomal protein uL18 family. As to quaternary structure, part of the 50S ribosomal subunit; part of the 5S rRNA/L5/L18/L25 subcomplex. Contacts the 5S and 23S rRNAs.

Functionally, this is one of the proteins that bind and probably mediate the attachment of the 5S RNA into the large ribosomal subunit, where it forms part of the central protuberance. The protein is Large ribosomal subunit protein uL18 of Cupriavidus taiwanensis (strain DSM 17343 / BCRC 17206 / CCUG 44338 / CIP 107171 / LMG 19424 / R1) (Ralstonia taiwanensis (strain LMG 19424)).